A 589-amino-acid polypeptide reads, in one-letter code: ATP-dependent lipid A-core flippase (589 aa).

The next 6 membrane-spanning stretches (helical) occupy residues 33-53 (VLAIVCMVLAAAGQAAFAWII), 70-90 (LWVPATLVGIFLFHGVTTFAS), 148-168 (VVVLVRDTFTVIFLLAYMTYL), 170-190 (GWLVMIVFGLGPLVAVVVTAA), 262-282 (LGAVIALAIILYLATMDVILE), and 283-303 (TISPGGMISFIAAMLLMLPPL). One can recognise an ABC transmembrane type-1 domain in the interval 33-315 (VLAIVCMVLA…VIGVNAEIQK (283 aa)). An ABC transporter domain is found at 347–583 (IEFDRVAFRY…NGHYASLHRV (237 aa)). Residue 381-388 (GRSGSGKT) coordinates ATP.

Belongs to the ABC transporter superfamily. Lipid exporter (TC 3.A.1.106) family. As to quaternary structure, homodimer.

It is found in the cell inner membrane. It catalyses the reaction ATP + H2O + lipid A-core oligosaccharideSide 1 = ADP + phosphate + lipid A-core oligosaccharideSide 2.. Its function is as follows. Involved in lipopolysaccharide (LPS) biosynthesis. Translocates lipid A-core from the inner to the outer leaflet of the inner membrane. Transmembrane domains (TMD) form a pore in the inner membrane and the ATP-binding domain (NBD) is responsible for energy generation. In Alkalilimnicola ehrlichii (strain ATCC BAA-1101 / DSM 17681 / MLHE-1), this protein is ATP-dependent lipid A-core flippase.